A 244-amino-acid chain; its full sequence is Flavin-dependent thymidylate synthase (244 aa).

In terms of domain architecture, ThyX spans 2-207 (VRVTLVNYTR…ELRPIIKWAK (206 aa)). FAD is bound by residues Ser56, 80–82 (RHR), and Gln88. Residues 77-80 (QLVR), 88-92 (QQSQR), and Arg146 each bind dUMP. The ThyX motif signature appears at 80 to 90 (RHRIASYTQQS). Residues 162 to 164 (NLR) and His168 contribute to the FAD site. Arg173 contacts dUMP. The active-site Involved in ionization of N3 of dUMP, leading to its activation is the Arg173.

It belongs to the thymidylate synthase ThyX family. In terms of assembly, homotetramer. The cofactor is FAD.

The enzyme catalyses dUMP + (6R)-5,10-methylene-5,6,7,8-tetrahydrofolate + NADPH + H(+) = dTMP + (6S)-5,6,7,8-tetrahydrofolate + NADP(+). It participates in pyrimidine metabolism; dTTP biosynthesis. Its function is as follows. Catalyzes the reductive methylation of 2'-deoxyuridine-5'-monophosphate (dUMP) to 2'-deoxythymidine-5'-monophosphate (dTMP) while utilizing 5,10-methylenetetrahydrofolate (mTHF) as the methyl donor, and NADPH and FADH(2) as the reductant. This is Flavin-dependent thymidylate synthase from Pyrococcus abyssi (strain GE5 / Orsay).